The primary structure comprises 618 residues: UvrABC system protein C (618 aa).

One can recognise a GIY-YIG domain in the interval 20 to 98; sequence TAPGVYRMYA…IKSLSPRYNV (79 aa). A UVR domain is found at 207–242; sequence DQLGEEIMHSMQQASEALEFERAARLRDLLSSLRSM.

The protein belongs to the UvrC family. In terms of assembly, interacts with UvrB in an incision complex.

It is found in the cytoplasm. Its function is as follows. The UvrABC repair system catalyzes the recognition and processing of DNA lesions. UvrC both incises the 5' and 3' sides of the lesion. The N-terminal half is responsible for the 3' incision and the C-terminal half is responsible for the 5' incision. This Xanthomonas campestris pv. campestris (strain B100) protein is UvrABC system protein C.